Reading from the N-terminus, the 389-residue chain is 26S proteasome non-ATPase regulatory subunit 6 (389 aa).

A PCI domain is found at 193–361 (DFKQAAELFL…EVVETNRPDS (169 aa)).

It belongs to the proteasome subunit S10 family. As to quaternary structure, component of the 19S proteasome regulatory particle complex. The 26S proteasome consists of a 20S core particle (CP) and two 19S regulatory subunits (RP). The regulatory particle is made of a lid composed of 9 subunits including PSMD6, a base containing 6 ATPases and few additional components.

In terms of biological role, component of the 26S proteasome, a multiprotein complex involved in the ATP-dependent degradation of ubiquitinated proteins. This complex plays a key role in the maintenance of protein homeostasis by removing misfolded or damaged proteins, which could impair cellular functions, and by removing proteins whose functions are no longer required. Therefore, the proteasome participates in numerous cellular processes, including cell cycle progression, apoptosis, or DNA damage repair. This Bos taurus (Bovine) protein is 26S proteasome non-ATPase regulatory subunit 6 (PSMD6).